The primary structure comprises 233 residues: Superoxide dismutase [Mn], mitochondrial (233 aa).

Residues 1 to 26 constitute a mitochondrion transit peptide; the sequence is MFAKTAAANLTKKGGLSLLSTTARRT. Residues His52 and His107 each contribute to the Mn(2+) site. A phosphothreonine mark is found at Thr147 and Thr149. The Mn(2+) site is built by Asp194 and His198.

Belongs to the iron/manganese superoxide dismutase family. As to quaternary structure, homotetramer. It depends on Mn(2+) as a cofactor.

The protein localises to the mitochondrion matrix. The catalysed reaction is 2 superoxide + 2 H(+) = H2O2 + O2. In terms of biological role, destroys superoxide anion radicals which are normally produced within the cells and which are toxic to biological systems. This chain is Superoxide dismutase [Mn], mitochondrial (SOD2), found in Saccharomyces cerevisiae (strain ATCC 204508 / S288c) (Baker's yeast).